The sequence spans 807 residues: MDNFQYSVQLSDREWAEFSATADECGLLQADLASGDEPLSSDIDQGDSSGSSPPGPPPLFTGQLVSQGRGQQSRELEDVAAQQLVSRSQCEPVLALEASHQVAGTSTQSEAPLFPSLDSVCPGQALSFPGPATCRDKMQRLLQGPAPSSPSKAPHSPESPGHSDNPQSSPDSLEASPRNPGRKKRRAVGAKGTKHSGSLDSAATQMSSPQLTRPKEALMSGTLMAKAQQDKPQPDSTSPEQMAREESGLDLSTPILITEQDQIRKTSRAALHVVSKPVQEVHPDVPMASPNVSTRASKPQPDVALPKPASKPQSDIASSTHPFTPDVSLSTLAFKCQPNTNQSTPASEPDMALSTPASEPDTALSTPASEPDTALSTPASEPDTALSTPASRSQLVKAEFASACTPGLHVDLSAAGSEIKPEVSSSMPAAVDVLRTDLPRSVSKTESKESVSIPVKPSLSPISQAEAAMVDTGVSVPPGGSIEKPAGQFSAGSSGESCLGPVQAPKKKKVRFSMAIPSHEDSGSGEPTGSPFLTPEQPPVPRTAAGSRGGSAAWDAVAVAPRLPQPRILKHLPPPVSSVSAEAESGNCFAVTLPEAYEFFFCDTIEEEDEDVEDEEAASQALDEVQWPDTCEFFFRDSRAQRSRCQRGHSPVSPPRADTVAPVPPEGLVPISIPEVYEHFFTEEGFGHRQPAATPMQTSELSREGGLEASTKPVSPTAEHLSLTVRKAGELRSPLTSFTFSQNDMCLVFVAFATWAVRTSDLQAPDAWKTVLLANIGTISAIRYFRRQVGRGHSGRPRSSSSSNPSC.

Disordered stretches follow at residues 29 to 80 (QADL…EDVA), 121 to 391 (CPGQ…TPAS), and 517 to 548 (PSHEDSGSGEPTGSPFLTPEQPPVPRTAAGSR). 2 stretches are compositionally biased toward low complexity: residues 40 to 52 (SSDIDQGDSSGSS) and 145 to 160 (PAPSSPSKAPHSPESP). Over residues 162-171 (HSDNPQSSPD) the composition is skewed to polar residues. A compositionally biased stretch (basic residues) spans 180-194 (PGRKKRRAVGAKGTK). Polar residues-rich tracts occupy residues 195–211 (HSGSLDSAATQMSSPQL), 311–346 (KPQSDIASSTHPFTPDVSLSTLAFKCQPNTNQSTPA), and 363–391 (ALSTPASEPDTALSTPASEPDTALSTPAS). The residue at position 198 (Ser-198) is a Phosphoserine. Thr-534 is subject to Phosphothreonine. Residue Arg-548 is modified to Omega-N-methylarginine.

As to expression, highly expressed in skeletal muscles and heart with lower levels in brown adipose tissue (at protein level). Muscle-specific expression is increased by endurance exercise.

The protein resides in the cytoplasm. It localises to the nucleus. Regulates the expression of selective PPARGC1A/B and ESRRA/B/G target genes with roles in glucose and lipid metabolism, energy transfer, contractile function, muscle mitochondrial biogenesis and oxidative capacity. Required for the efficient induction of MT-CO2, MT-CO3, COX4I1, TFB1M, TFB2M, POLRMT and SIRT3 by PPARGC1A. Positively regulates the PPARGC1A/ESRRG-induced expression of CKMT2, TNNI3 and SLC2A4 and negatively regulates the PPARGC1A/ESRRG-induced expression of PDK4. The polypeptide is PGC-1 and ERR-induced regulator in muscle protein 1 (Perm1) (Mus musculus (Mouse)).